The chain runs to 222 residues: Glutathione-specific gamma-glutamylcyclotransferase 1 (222 aa).

The span at 1–22 (MKQESAAPNTPPTSQSPTPSAQ) shows a compositional bias: low complexity. Residues 1–24 (MKQESAAPNTPPTSQSPTPSAQFP) are disordered. 35–40 (IFGYGS) is a substrate binding site. The active-site Proton acceptor is the glutamate 115.

Belongs to the gamma-glutamylcyclotransferase family. ChaC subfamily. As to quaternary structure, interacts with NOTCH1 (via extracellular region).

It localises to the cytoplasm. Its subcellular location is the cytosol. It is found in the golgi apparatus. The protein localises to the trans-Golgi network. The enzyme catalyses glutathione = L-cysteinylglycine + 5-oxo-L-proline. Catalyzes the cleavage of glutathione into 5-oxo-L-proline and a Cys-Gly dipeptide. Acts specifically on glutathione, but not on other gamma-glutamyl peptides. Glutathione depletion is an important factor for apoptosis initiation and execution. Acts as a pro-apoptotic component of the unfolded protein response pathway by mediating the pro-apoptotic effects of the ATF4-ATF3-DDIT3/CHOP cascade. Negative regulator of Notch signaling pathway involved in embryonic neurogenesis: acts by inhibiting Notch cleavage by furin, maintaining Notch in an immature inactive form, thereby promoting neurogenesis in embryos. This Homo sapiens (Human) protein is Glutathione-specific gamma-glutamylcyclotransferase 1.